Consider the following 194-residue polypeptide: Phosphoheptose isomerase (194 aa).

The region spanning 37-194 is the SIS domain; that stretch reads ISDSFKQGGK…LIEFEMAKDV (158 aa). 52-54 provides a ligand contact to substrate; sequence NGG. Zn(2+) contacts are provided by histidine 61 and glutamate 65. Residues glutamate 65, 93 to 94, 119 to 121, serine 124, and glutamine 172 each bind substrate; these read ND and STS. Residues glutamine 172 and histidine 180 each coordinate Zn(2+).

The protein belongs to the SIS family. GmhA subfamily. In terms of assembly, homotetramer. The cofactor is Zn(2+).

Its subcellular location is the cytoplasm. The catalysed reaction is 2 D-sedoheptulose 7-phosphate = D-glycero-alpha-D-manno-heptose 7-phosphate + D-glycero-beta-D-manno-heptose 7-phosphate. The protein operates within carbohydrate biosynthesis; D-glycero-D-manno-heptose 7-phosphate biosynthesis; D-glycero-alpha-D-manno-heptose 7-phosphate and D-glycero-beta-D-manno-heptose 7-phosphate from sedoheptulose 7-phosphate: step 1/1. In terms of biological role, catalyzes the isomerization of sedoheptulose 7-phosphate in D-glycero-D-manno-heptose 7-phosphate. The chain is Phosphoheptose isomerase from Actinobacillus succinogenes (strain ATCC 55618 / DSM 22257 / CCUG 43843 / 130Z).